Reading from the N-terminus, the 130-residue chain is Glycine cleavage system H protein (130 aa).

The 82-residue stretch at V25–K106 folds into the Lipoyl-binding domain. K66 is subject to N6-lipoyllysine.

This sequence belongs to the GcvH family. In terms of assembly, the glycine cleavage system is composed of four proteins: P, T, L and H. It depends on (R)-lipoate as a cofactor.

Functionally, the glycine cleavage system catalyzes the degradation of glycine. The H protein shuttles the methylamine group of glycine from the P protein to the T protein. In Leptospira biflexa serovar Patoc (strain Patoc 1 / Ames), this protein is Glycine cleavage system H protein.